The sequence spans 411 residues: Alpha-galactosidase (411 aa).

The N-terminal stretch at 1–24 (MATHYSIIGGMIIVVLLMIIGSEG) is a signal peptide. The propeptide occupies 25–47 (GRLLEKKNRTSAEAEHYNVRRYL). Asparagine 32 carries an N-linked (GlcNAc...) asparagine glycan. An intrachain disulfide couples cysteine 68 to cysteine 100. N-linked (GlcNAc...) asparagine glycosylation is present at asparagine 145. A disulfide bridge links cysteine 148 with cysteine 179. Aspartate 177 (nucleophile) is an active-site residue. 210-214 (EWGWE) serves as a coordination point for substrate. The active-site Proton donor is aspartate 232. Asparagine 352 carries N-linked (GlcNAc...) asparagine glycosylation.

This sequence belongs to the glycosyl hydrolase 27 family.

It catalyses the reaction Hydrolysis of terminal, non-reducing alpha-D-galactose residues in alpha-D-galactosides, including galactose oligosaccharides, galactomannans and galactolipids.. Its function is as follows. Involved in the hydrolysis of the galactomannan, it splits alpha-linked galactose moieties. It is particularly suitable for the hydrolysis of guar gum to a gum with improved gelling properties. Preferentially cleaves alpha-1,6 glycoside linkages. The sequence is that of Alpha-galactosidase from Cyamopsis tetragonoloba (Guar).